The chain runs to 160 residues: MSIPHSVFSALLVFVALATTTLASTEACLPTNKREDGMNINFYEYTIGDQTTYLEPEYMGYEYSNTKKLGSVSGQTNLSIYYSPPCESTPTCVTYAVLKRDEDGYDPCGPLYETKKRDTEYCDPNTAYWSSDLFGFYTTPTNVTVEMTGYLIWSMGNRRR.

A signal peptide spans 1 to 23; that stretch reads MSIPHSVFSALLVFVALATTTLA. Over 24–132 the chain is Cytoplasmic; it reads STEACLPTNK…DPNTAYWSSD (109 aa). Residues 133–155 traverse the membrane as a helical segment; it reads LFGFYTTPTNVTVEMTGYLIWSM. Over 156 to 160 the chain is Extracellular; sequence GNRRR.

To yeast protein FLO1.

Its subcellular location is the cell membrane. This is an uncharacterized protein from Saccharomyces cerevisiae (strain ATCC 204508 / S288c) (Baker's yeast).